The chain runs to 435 residues: Tol-Pal system protein TolB (435 aa).

The N-terminal stretch at 1–20 (MRKIIAGVFIFVFLISNLYA) is a signal peptide.

The protein belongs to the TolB family. In terms of assembly, the Tol-Pal system is composed of five core proteins: the inner membrane proteins TolA, TolQ and TolR, the periplasmic protein TolB and the outer membrane protein Pal. They form a network linking the inner and outer membranes and the peptidoglycan layer.

It is found in the periplasm. Part of the Tol-Pal system, which plays a role in outer membrane invagination during cell division and is important for maintaining outer membrane integrity. In Francisella tularensis subsp. holarctica (strain LVS), this protein is Tol-Pal system protein TolB.